Here is a 442-residue protein sequence, read N- to C-terminus: F-box/FBD/LRR-repeat protein At3g14710 (442 aa).

The region spanning 26–73 (DKFSSLLESVVSIILSQLPTAEAVSTSVLSKSWKNIWTNITDLHFDDT) is the F-box domain. 3 LRR repeats span residues 126–147 (NLQR…SLFP), 151–172 (SLVE…AILP), and 173–194 (NLKF…SKNL). Residues 370-414 (VESPDCVTTMLKVLQIRNFKPNRLQISVLRYVLDNAEILGSVILS) form the FBD domain.

The chain is F-box/FBD/LRR-repeat protein At3g14710 from Arabidopsis thaliana (Mouse-ear cress).